Here is a 290-residue protein sequence, read N- to C-terminus: Ig delta chain C region membrane-bound form (290 aa).

Positions 5–105 (PDMFLLSECK…WDSQSSKRVT (101 aa)) constitute an Ig-like 1 domain. Cys-26 and Cys-78 are oxidised to a cystine. Residues Asn-58 and Asn-75 are each glycosylated (N-linked (GlcNAc...) asparagine). Residues 89 to 111 (PFKFPESWDSQSSKRVTPTLQAK) are disordered. The segment covering 96–111 (WDSQSSKRVTPTLQAK) has biased composition (polar residues). N-linked (GlcNAc...) asparagine glycosylation is found at Asn-112, Asn-135, and Asn-227. The region spanning 133–233 (PSNLTVNILT…TKLNASKSLA (101 aa)) is the Ig-like 2 domain. A helical membrane pass occupies residues 262 to 279 (GLWPTMCTFVALFLLTLL). The Cytoplasmic segment spans residues 280-290 (YSGFVTFIKVK).

In terms of tissue distribution, cell lines producing IgD contain several mRNA species for Ig delta chains. In plasmacytomas, the secreted form is the major component, and the membrane-bound form is a minor component. In spleen, however, the membrane-bound form is the major component. These two forms differ in their C-terminal segments.

Its subcellular location is the cell membrane. The sequence is that of Ig delta chain C region membrane-bound form from Mus musculus (Mouse).